A 317-amino-acid polypeptide reads, in one-letter code: MGAKVKVAVVQAEPVWFNLQETVKRVNELIESAYNKGAELIAFPEVFVPGYPTWIWTNAADLDRNLMYTKNSLTYDSPEFISIIETVKKYPIHVVLGFSEKDQGSLYISQCIIDNTGEIVLKRRKFKPTHVERVIWGDTADSNMKSVVTLNFKEAGPVEVGCLSCWEHMQPLLYYNSAAQHEKIHIGSWPALNDKDLGVYCFTKAGFHGLARAYANQVQSFYLFTSILGQRIQEALPDVKLSPYFEKGAGCGAVFAPDGSQITEDHPDDFDGVIISELDMDKILLQKNLVDIVGHYARPDMVSLSHNRPNTEFVNRK.

Residues 5–280 form the CN hydrolase domain; sequence VKVAVVQAEP…DGVIISELDM (276 aa). Catalysis depends on Glu45, which acts as the Proton acceptor. Lys125 is an active-site residue. Catalysis depends on Cys165, which acts as the Nucleophile.

It belongs to the carbon-nitrogen hydrolase superfamily. Nitrilase family.

The enzyme catalyses a nitrile + 2 H2O = a carboxylate + NH4(+). Functionally, nitrilase that hydrolyzes preferentially 4-cyanopyridine. Is also able to hydrolyze some aliphatic nitriles, such as phenylacetonitrile. The protein is Nitrilase of Meyerozyma guilliermondii (strain ATCC 6260 / CBS 566 / DSM 6381 / JCM 1539 / NBRC 10279 / NRRL Y-324) (Yeast).